Reading from the N-terminus, the 804-residue chain is Leucine--tRNA ligase (804 aa).

Positions 39 to 50 (PFPSGKGLHVGH) match the 'HIGH' region motif. The 'KMSKS' region motif lies at 573-577 (KMSKS). Position 576 (Lys576) interacts with ATP.

Belongs to the class-I aminoacyl-tRNA synthetase family.

It is found in the cytoplasm. The enzyme catalyses tRNA(Leu) + L-leucine + ATP = L-leucyl-tRNA(Leu) + AMP + diphosphate. The sequence is that of Leucine--tRNA ligase from Lactobacillus johnsonii (strain CNCM I-12250 / La1 / NCC 533).